Here is a 243-residue protein sequence, read N- to C-terminus: Venom nerve growth factor 1 (243 aa).

The first 18 residues, 1-18 (MSMLCYTLIIAFLIGIWA), serve as a signal peptide directing secretion. The propeptide occupies 19–125 (APKSEDNVPL…TLNRNIRAKR (107 aa)). Residues 47 to 66 (GLKTSRNTDQRHPAPKKAED) are compositionally biased toward basic and acidic residues. A disordered region spans residues 47-69 (GLKTSRNTDQRHPAPKKAEDQEL). 3 cysteine pairs are disulfide-bonded: cysteine 139–cysteine 204, cysteine 182–cysteine 232, and cysteine 192–cysteine 234. Asparagine 148 is a glycosylation site (N-linked (GlcNAc...) asparagine).

This sequence belongs to the NGF-beta family. As to quaternary structure, homodimer; non-covalently linked. Expressed by the venom gland.

It localises to the secreted. Functionally, nerve growth factor is important for the development and maintenance of the sympathetic and sensory nervous systems. It stimulates division and differentiation of sympathetic and embryonic sensory neurons as well as basal forebrain cholinergic neurons in the brain. Its relevance in the snake venom is not clear. However, it has been shown to inhibit metalloproteinase-dependent proteolysis of platelet glycoprotein Ib alpha, suggesting a metalloproteinase inhibition to prevent metalloprotease autodigestion and/or protection against prey proteases. Binds a lipid between the two protein chains in the homodimer. The lipid-bound form promotes histamine relase from mouse mast cells, contrary to the lipid-free form. The polypeptide is Venom nerve growth factor 1 (Oxyuranus microlepidotus (Inland taipan)).